A 154-amino-acid polypeptide reads, in one-letter code: Fibroblast growth factor 2 (154 aa).

Positions 1–9 (MAASGITSL) are excised as a propeptide. Asn-35 contributes to the heparin binding site. At Tyr-81 the chain carries Phosphotyrosine; by TEC. Residue Lys-94 forms a Glycyl lysine isopeptide (Lys-Gly) (interchain with G-Cter in SUMO1) linkage. The tract at residues 127-143 (KRTGQYKLGSKTGPGQK) is heparin-binding.

It belongs to the heparin-binding growth factors family. In terms of assembly, monomer. Homodimer. Interacts with FGFR1, FGFR2, FGFR3 and FGFR4. Affinity between fibroblast growth factors (FGFs) and their receptors is increased by heparan sulfate glycosaminoglycans that function as coreceptors. Interacts with CSPG4, FGFBP1 and TEC. Found in a complex with FGFBP1, FGF1 and FGF2. Interacts with FGFBP3. Interacts with integrin ITGAV:ITGB3; the interaction is required for FGF2 signaling. Interacts with SNORC (via the extracellular domain). Interacts with glypican GPC3. Phosphorylation at Tyr-81 regulates FGF2 unconventional secretion.

The protein localises to the secreted. The protein resides in the nucleus. Its function is as follows. Acts as a ligand for FGFR1, FGFR2, FGFR3 and FGFR4. Also acts as an integrin ligand which is required for FGF2 signaling. Binds to integrin ITGAV:ITGB3. Plays an important role in the regulation of cell survival, cell division, cell differentiation and cell migration. Functions as a potent mitogen in vitro. Can induce angiogenesis. Mediates phosphorylation of ERK1/2 and thereby promotes retinal lens fiber differentiation. The protein is Fibroblast growth factor 2 (Fgf2) of Mus musculus (Mouse).